A 366-amino-acid chain; its full sequence is NADH-quinone oxidoreductase subunit D (366 aa).

It belongs to the complex I 49 kDa subunit family. NDH-1 is composed of 14 different subunits. Subunits NuoB, C, D, E, F, and G constitute the peripheral sector of the complex.

The protein localises to the cell membrane. It catalyses the reaction a quinone + NADH + 5 H(+)(in) = a quinol + NAD(+) + 4 H(+)(out). Functionally, NDH-1 shuttles electrons from NADH, via FMN and iron-sulfur (Fe-S) centers, to quinones in the respiratory chain. The immediate electron acceptor for the enzyme in this species is believed to be a menaquinone. Couples the redox reaction to proton translocation (for every two electrons transferred, four hydrogen ions are translocated across the cytoplasmic membrane), and thus conserves the redox energy in a proton gradient. The sequence is that of NADH-quinone oxidoreductase subunit D from Bacillus anthracis.